We begin with the raw amino-acid sequence, 226 residues long: Respiratory nitrate reductase 2 gamma chain (226 aa).

The Periplasmic portion of the chain corresponds to M1–Y4. A helical membrane pass occupies residues L5–D30. Residues Y31–G48 lie on the Cytoplasmic side of the membrane. The chain crosses the membrane as a helical span at residues M49–M71. Residues H57 and H67 each coordinate heme b. Over L72 to P83 the chain is Periplasmic. Residues V84–R113 traverse the membrane as a helical segment. Topologically, residues L114–T125 are cytoplasmic. Residues P126 to A149 form a helical membrane-spanning segment. The Periplasmic segment spans residues Q150–F183. Residues V184 to F199 traverse the membrane as a helical segment. Heme b is bound by residues H188 and H206. Residues P200–R226 lie on the Cytoplasmic side of the membrane.

As to quaternary structure, dimer of heterotrimers each composed of an alpha, a beta and a gamma chain. Alpha and beta are catalytic chains; gamma chains are involved in binding the enzyme complex to the cytoplasmic membrane. Requires heme as cofactor.

The protein resides in the cell inner membrane. The enzyme catalyses nitrate + a quinol = a quinone + nitrite + H2O. Functionally, this is a second nitrate reductase enzyme which can substitute for the NRA enzyme and allows E.coli to use nitrate as an electron acceptor during anaerobic growth. The gamma chain is a membrane-embedded heme-iron unit resembling cytochrome b, which transfers electrons from quinones to the beta subunit. This is Respiratory nitrate reductase 2 gamma chain (narV) from Escherichia coli (strain K12).